The primary structure comprises 338 residues: Methionyl-tRNA formyltransferase (338 aa).

110–113 (SLLP) contacts (6S)-5,6,7,8-tetrahydrofolate.

It belongs to the Fmt family.

The catalysed reaction is L-methionyl-tRNA(fMet) + (6R)-10-formyltetrahydrofolate = N-formyl-L-methionyl-tRNA(fMet) + (6S)-5,6,7,8-tetrahydrofolate + H(+). Attaches a formyl group to the free amino group of methionyl-tRNA(fMet). The formyl group appears to play a dual role in the initiator identity of N-formylmethionyl-tRNA by promoting its recognition by IF2 and preventing the misappropriation of this tRNA by the elongation apparatus. The polypeptide is Methionyl-tRNA formyltransferase (Synechococcus sp. (strain CC9605)).